The primary structure comprises 240 residues: UDP-2,3-diacylglucosamine hydrolase (240 aa).

The Mn(2+) site is built by D8, H10, D41, N79, and H114. 79-80 (NR) provides a ligand contact to substrate. Substrate-binding residues include D122, S160, N164, K167, and H195. 2 residues coordinate Mn(2+): H195 and H197.

It belongs to the LpxH family. It depends on Mn(2+) as a cofactor.

It is found in the cell inner membrane. The enzyme catalyses UDP-2-N,3-O-bis[(3R)-3-hydroxytetradecanoyl]-alpha-D-glucosamine + H2O = 2-N,3-O-bis[(3R)-3-hydroxytetradecanoyl]-alpha-D-glucosaminyl 1-phosphate + UMP + 2 H(+). Its pathway is glycolipid biosynthesis; lipid IV(A) biosynthesis; lipid IV(A) from (3R)-3-hydroxytetradecanoyl-[acyl-carrier-protein] and UDP-N-acetyl-alpha-D-glucosamine: step 4/6. Hydrolyzes the pyrophosphate bond of UDP-2,3-diacylglucosamine to yield 2,3-diacylglucosamine 1-phosphate (lipid X) and UMP by catalyzing the attack of water at the alpha-P atom. Involved in the biosynthesis of lipid A, a phosphorylated glycolipid that anchors the lipopolysaccharide to the outer membrane of the cell. This Escherichia coli (strain UTI89 / UPEC) protein is UDP-2,3-diacylglucosamine hydrolase.